The primary structure comprises 302 residues: MPRIGLIVNDGKPLAVQTADTIQQRLELAGHAVVRASSSGGMVGFANPDQHLRLLGYSACVPEGFNNSMALAIVLGGDGTVLSAARQTAPVGVPILTINTGHLGFLAEAYLGDLDRALEVVLTEQWTIEERSNLVVSVMRGDQRRWEALSLNEMALHREPLTSMCHFEIAIGRHAPVDIAADGVILSTPTGSTAYALSAGGPVISPDCPVLQLTPIAPHSLASRALVFSDREPVTVFPATPERLMMVVDGSAGCYVWPEDRVLIRRSEHPVRFVRLVDHEFFQVLRNKLGWGLPHIAKPDKG.

Aspartate 78 (proton acceptor) is an active-site residue. NAD(+) contacts are provided by residues aspartate 78–glycine 79, asparagine 152–glutamate 153, aspartate 182, threonine 193–serine 198, and alanine 217.

It belongs to the NAD kinase family. It depends on a divalent metal cation as a cofactor.

It is found in the cytoplasm. The enzyme catalyses NAD(+) + ATP = ADP + NADP(+) + H(+). Involved in the regulation of the intracellular balance of NAD and NADP, and is a key enzyme in the biosynthesis of NADP. Catalyzes specifically the phosphorylation on 2'-hydroxyl of the adenosine moiety of NAD to yield NADP. This is NAD kinase 2 from Parasynechococcus marenigrum (strain WH8102).